The chain runs to 290 residues: Appressorium protein ROW2 (290 aa).

An N-terminal signal peptide occupies residues 1–19 (MFTKSVFIALVAGVLGVTA). The segment at 266–290 (AIKTPSKRSVMATHVKRSPEWEEEP) is disordered.

It is found in the secreted. Its subcellular location is the nucleus. In terms of biological role, plays a role in the formation of the appressorium, a specialized infection structure with the purpose of penetrating the host surface, and is required for proper remodeling of the appressorium wall and vesicle secretion. This Mycosarcoma maydis (Corn smut fungus) protein is Appressorium protein ROW2.